Consider the following 254-residue polypeptide: Isoprenyl transferase (254 aa).

Residue D23 is part of the active site. D23 serves as a coordination point for Mg(2+). Substrate is bound by residues 24–27, W28, R36, H40, and 68–70; these read GNGR and STE. Catalysis depends on N71, which acts as the Proton acceptor. Residues W72, R74, R191, and 197–199 each bind substrate; that span reads RIS. Residue E210 coordinates Mg(2+).

The protein belongs to the UPP synthase family. Homodimer. Requires Mg(2+) as cofactor.

In terms of biological role, catalyzes the condensation of isopentenyl diphosphate (IPP) with allylic pyrophosphates generating different type of terpenoids. The polypeptide is Isoprenyl transferase (Porphyromonas gingivalis (strain ATCC BAA-308 / W83)).